The chain runs to 224 residues: MSISDWPEAERPREKLLKNGPAYLSDAELLAIFLRTGIAGKSAVDLARELLKRFRGLTGLFAADQGAFCQVPGMGPAKFAQLQAVLEMARRALEEELKSSDAMDSPGPVRAFLRLSLEGKEHEVFVSIFLDARNRVIATEELFQGTLTQTSVYPREVVKRALHHNAAAVIFAHNHPSGAAEPSHADAVLTQSLKQALLLVDVRVLDHFIVGRGATLSFAEQGLI.

The MPN domain maps to 102–224; sequence AMDSPGPVRA…TLSFAEQGLI (123 aa). Zn(2+) contacts are provided by histidine 173, histidine 175, and aspartate 186. Residues 173 to 186 carry the JAMM motif motif; sequence HNHPSGAAEPSHAD.

This sequence belongs to the UPF0758 family.

This chain is UPF0758 protein Nmul_A2138, found in Nitrosospira multiformis (strain ATCC 25196 / NCIMB 11849 / C 71).